We begin with the raw amino-acid sequence, 209 residues long: N-(5'-phosphoribosyl)anthranilate isomerase (209 aa).

Belongs to the TrpF family.

It catalyses the reaction N-(5-phospho-beta-D-ribosyl)anthranilate = 1-(2-carboxyphenylamino)-1-deoxy-D-ribulose 5-phosphate. Its pathway is amino-acid biosynthesis; L-tryptophan biosynthesis; L-tryptophan from chorismate: step 3/5. The chain is N-(5'-phosphoribosyl)anthranilate isomerase from Granulibacter bethesdensis (strain ATCC BAA-1260 / CGDNIH1).